The following is a 415-amino-acid chain: Serine hydroxymethyltransferase (415 aa).

(6S)-5,6,7,8-tetrahydrofolate-binding positions include leucine 119 and 123-125 (GHL). Lysine 228 is subject to N6-(pyridoxal phosphate)lysine. A (6S)-5,6,7,8-tetrahydrofolate-binding site is contributed by 353–355 (SAF).

This sequence belongs to the SHMT family. As to quaternary structure, homodimer. Requires pyridoxal 5'-phosphate as cofactor.

It is found in the cytoplasm. It carries out the reaction (6R)-5,10-methylene-5,6,7,8-tetrahydrofolate + glycine + H2O = (6S)-5,6,7,8-tetrahydrofolate + L-serine. It participates in one-carbon metabolism; tetrahydrofolate interconversion. The protein operates within amino-acid biosynthesis; glycine biosynthesis; glycine from L-serine: step 1/1. Its function is as follows. Catalyzes the reversible interconversion of serine and glycine with tetrahydrofolate (THF) serving as the one-carbon carrier. Also exhibits THF-independent aldolase activity toward beta-hydroxyamino acids, producing glycine and aldehydes, via a retro-aldol mechanism. This chain is Serine hydroxymethyltransferase, found in Haloarcula marismortui (strain ATCC 43049 / DSM 3752 / JCM 8966 / VKM B-1809) (Halobacterium marismortui).